The following is a 329-amino-acid chain: NADH-quinone oxidoreductase subunit H (329 aa).

Helical transmembrane passes span 9-29 (LIKI…ATYI), 42-62 (GPCY…IKLF), 75-95 (FIFT…MAPI), 117-137 (IGFL…ILAG), 154-174 (IQLL…LMVV), 188-208 (GGFL…FLIA), 238-258 (LKWG…SFVI), 269-291 (WGFI…LSMW), and 309-329 (WKIM…IILI).

The protein belongs to the complex I subunit 1 family. As to quaternary structure, NDH-1 is composed of 14 different subunits. Subunits NuoA, H, J, K, L, M, N constitute the membrane sector of the complex.

The protein localises to the cell inner membrane. The catalysed reaction is a quinone + NADH + 5 H(+)(in) = a quinol + NAD(+) + 4 H(+)(out). Functionally, NDH-1 shuttles electrons from NADH, via FMN and iron-sulfur (Fe-S) centers, to quinones in the respiratory chain. The immediate electron acceptor for the enzyme in this species is believed to be ubiquinone. Couples the redox reaction to proton translocation (for every two electrons transferred, four hydrogen ions are translocated across the cytoplasmic membrane), and thus conserves the redox energy in a proton gradient. This subunit may bind ubiquinone. In Helicobacter pylori (strain HPAG1), this protein is NADH-quinone oxidoreductase subunit H.